Reading from the N-terminus, the 329-residue chain is Acrosin (329 aa).

The signal sequence occupies residues 1–17 (MLPTAVLLVLAVSVVAR). N-linked (GlcNAc...) asparagine glycosylation occurs at Asn-19. 6 cysteine pairs are disulfide-bonded: Cys-22–Cys-152, Cys-26–Cys-160, Cys-71–Cys-87, Cys-175–Cys-244, Cys-207–Cys-223, and Cys-234–Cys-264. Positions 40 to 288 (IIGGQDAAHG…YLNWIASKIG (249 aa)) constitute a Peptidase S1 domain. Residues His-86 and Asp-140 each act as charge relay system in the active site. Asn-208 carries an N-linked (GlcNAc...) asparagine glycan. The active-site Charge relay system is the Ser-238.

It belongs to the peptidase S1 family. Heavy chain (catalytic) and a light chain linked by two disulfide bonds. Forms a heterodimer with SERPINA5.

It carries out the reaction Preferential cleavage: Arg-|-Xaa, Lys-|-Xaa.. Its activity is regulated as follows. Inhibited by SERPINA5. Functionally, acrosin is the major protease of mammalian spermatozoa. It is a serine protease of trypsin-like cleavage specificity, it is synthesized in a zymogen form, proacrosin and stored in the acrosome. The sequence is that of Acrosin (ACR) from Ovis aries (Sheep).